Consider the following 481-residue polypeptide: Zinc metalloproteinase/disintegrin (481 aa).

The first 20 residues, M1–S20, serve as a signal peptide directing secretion. Positions I21–E190 are excised as a propeptide. The region spanning R197–P392 is the Peptidase M12B domain. Intrachain disulfides connect C308-C387, C349-C371, and C351-C354. H333 contacts Zn(2+). E334 is a catalytic residue. Residues H337 and H343 each contribute to the Zn(2+) site. A propeptide spanning residues L393 to L408 is cleaved from the precursor. A Disintegrin domain is found at T400–A481. 6 cysteine pairs are disulfide-bonded: C414-C429, C416-C424, C423-C446, C437-C443, C442-C467, and C455-C474. A Cell attachment site motif is present at residues R459 to D461.

Belongs to the venom metalloproteinase (M12B) family. P-II subfamily. P-IIa sub-subfamily. As to quaternary structure, monomer. The cofactor is Zn(2+). As to expression, expressed by the venom gland.

It localises to the secreted. Its function is as follows. Impairs hemostasis in the envenomed animal. In terms of biological role, disintegrin elegantin-2a-f: inhibits platelet aggregation induced by ADP, thrombin, platelet-activating factor and collagen. Acts by inhibiting fibrinogen interaction with platelet receptors GPIIb/GPIIIa (ITGA2B/ITGB3). This Protobothrops elegans (Elegant pitviper) protein is Zinc metalloproteinase/disintegrin.